Reading from the N-terminus, the 224-residue chain is Synaptogyrin-2 (224 aa).

Residue Met1 is modified to N-acetylmethionine. Phosphoserine is present on Ser3. The MARVEL domain occupies 20–171; it reads FLTQPQVVAR…LASLAYQRYK (152 aa). Transmembrane regions (helical) follow at residues 26-46, 73-93, 105-125, and 147-167; these read VVAR…IYGE, AIGV…AYFP, VIGD…GFCF, and AAIT…SLAY.

This sequence belongs to the synaptogyrin family. (Microbial infection) Interacts with SFTS phlebovirus protein NSs; may be involved in virus replication. Post-translationally, may be tyrosine phosphorylated by Src. Ubiquitous; low expression in brain.

It is found in the cytoplasmic vesicle membrane. Its subcellular location is the cytoplasmic vesicle. It localises to the secretory vesicle. The protein localises to the synaptic vesicle membrane. The protein resides in the lipid droplet. In terms of biological role, may play a role in regulated exocytosis. In neuronal cells, modulates the localization of synaptophysin/SYP into synaptic-like microvesicles and may therefore play a role in the formation and/or the maturation of this vesicles. May also play a role in GLUT4 storage and transport to the plasma membrane. (Microbial infection) May play a role in the assembly of cytoplasmic inclusion bodies required for SFTS phlebovirus replication. This Homo sapiens (Human) protein is Synaptogyrin-2.